Reading from the N-terminus, the 180-residue chain is UPF0227 protein PC1_2487 (180 aa).

This sequence belongs to the UPF0227 family.

This Pectobacterium carotovorum subsp. carotovorum (strain PC1) protein is UPF0227 protein PC1_2487.